A 140-amino-acid chain; its full sequence is Thioredoxin H9 (140 aa).

Gly2 carries N-myristoyl glycine lipidation. Residue Cys4 is the site of S-palmitoyl cysteine attachment. At Ser14 the chain carries Phosphoserine. The Thioredoxin domain occupies 25–129 (VHLITTKESW…PELQKKVTSI (105 aa)). Active-site nucleophile residues include Cys57 and Cys60. Cys57 and Cys60 are oxidised to a cystine. Position 136 is a phosphoserine (Ser136).

Belongs to the thioredoxin family. Plant H-type subfamily. In terms of tissue distribution, ubiquitous.

The protein resides in the cell membrane. Functionally, probable thiol-disulfide oxidoreductase that may play a role in intercellular communication due to its ability to move from cell to cell. The chain is Thioredoxin H9 (TRX9) from Arabidopsis thaliana (Mouse-ear cress).